The following is a 1474-amino-acid chain: Adhesion G protein-coupled receptor L1 (1474 aa).

A signal peptide spans 1-24; that stretch reads MARLAAVLWNLCVTAVLVTSATQG. Residues 25–858 are Extracellular-facing; sequence LSRAGLPFGL…EIYQGRINEL (834 aa). Residues 40-129 form the SUEL-type lectin domain; the sequence is ACEGYPIELR…KYLEVQYDCV (90 aa). 5 cysteine pairs are disulfide-bonded: Cys-41–Cys-71, Cys-50–Cys-128, Cys-83–Cys-115, Cys-96–Cys-102, and Cys-140–Cys-322. Residue Glu-42 coordinates alpha-L-rhamnose. Residue Asn-98 is glycosylated (N-linked (GlcNAc...) asparagine). Position 117 to 120 (117 to 120) interacts with alpha-L-rhamnose; that stretch reads GTYK. Positions 139 to 398 constitute an Olfactomedin-like domain; that stretch reads VCPGTLQKVL…VVRYSLEFGP (260 aa). The disordered stretch occupies residues 400-434; sequence DPSAGPATSPPLSTTTTARPTPLTSTASPAATTPL. Positions 405–434 are enriched in low complexity; the sequence is PATSPPLSTTTTARPTPLTSTASPAATTPL. 2 disulfides stabilise this stretch: Cys-480-Cys-515 and Cys-503-Cys-532. 6 N-linked (GlcNAc...) asparagine glycosylation sites follow: Asn-531, Asn-640, Asn-742, Asn-801, Asn-806, and Asn-827. The GAIN-B domain maps to 669–851; it reads PARFLAAKEN…AVLMAHREIY (183 aa). 2 cysteine pairs are disulfide-bonded: Cys-802–Cys-833 and Cys-821–Cys-835. Residues 802 to 851 are GPS; that stretch reads CSFWNYSERSMLGYWSTQGCRLVESNKTHTTCACSHLTNFAVLMAHREIY. Residues 859-879 form a helical membrane-spanning segment; the sequence is LLSVITWVGIVISLVCLAICI. Residues 880 to 893 are Cytoplasmic-facing; that stretch reads STFCFLRGLQTDRN. Residues 894–914 form a helical membrane-spanning segment; that stretch reads TIHKNLCINLFLAELLFLVGI. Over 915 to 920 the chain is Extracellular; it reads DKTQYE. Residues 921-941 traverse the membrane as a helical segment; it reads IACPIFAGLLHYFFLAAFSWL. Residues 942-964 lie on the Cytoplasmic side of the membrane; the sequence is CLEGVHLYLLLVEVFESEYSRTK. The helical transmembrane segment at 965-985 threads the bilayer; it reads YYYLGGYCFPALVVGIAAAID. Residues 986–1002 are Extracellular-facing; it reads YRSYGTEKACWLRVDNY. The chain crosses the membrane as a helical span at residues 1003–1023; it reads FIWSFIGPVSFVIVVNLVFLM. The Cytoplasmic segment spans residues 1024–1050; the sequence is VTLHKMIRSSSVLKPDSSRLDNIKSWA. Residues 1051-1071 form a helical membrane-spanning segment; sequence LGAIALLFLLGLTWAFGLLFI. The Extracellular portion of the chain corresponds to 1072 to 1075; the sequence is NKES. A helical membrane pass occupies residues 1076–1096; it reads VVMAYLFTTFNAFQGVFIFVF. The Cytoplasmic segment spans residues 1097-1474; that stretch reads HCALQKKVHK…DGQMQLVTSL (378 aa). Arg-1194 carries the post-translational modification Omega-N-methylarginine. Ser-1220 carries the post-translational modification Phosphoserine. 4 disordered regions span residues 1248–1273, 1294–1328, 1360–1429, and 1451–1474; these read FNNS…RGRN, RGSS…PGGA, ESES…SRPP, and YLAA…VTSL. 2 stretches are compositionally biased toward pro residues: residues 1302–1314 and 1408–1420; these read GPPP…PPVP and ALPP…PGPP. Phosphoserine is present on Ser-1473.

Belongs to the G-protein coupled receptor 2 family. Adhesion G-protein coupled receptor (ADGR) subfamily. In terms of assembly, forms a heterodimer, consisting of a large extracellular region (p120) non-covalently linked to a seven-transmembrane moiety (p85). Interacts with syntaxin and with proteins of the SHANK family via the PDZ domain. Interacts (via extracellular domain) with FLRT1, FLRT2 and FLRT3 (via extracellular domain). Post-translationally, autoproteolytically cleaved into 2 subunits, an extracellular subunit and a seven-transmembrane subunit. This proteolytic processing takes place early in the biosynthetic pathway, either in the endoplasmic reticulum or in the early compartment of the Golgi apparatus.

Its subcellular location is the cell membrane. The protein localises to the cell projection. It localises to the axon. It is found in the growth cone. The protein resides in the synapse. Its subcellular location is the presynaptic cell membrane. The protein localises to the synaptosome. Calcium-independent receptor of high affinity for alpha-latrotoxin, an excitatory neurotoxin present in black widow spider venom which triggers massive exocytosis from neurons and neuroendocrine cells. Receptor for TENM2 that mediates heterophilic synaptic cell-cell contact and postsynaptic specialization. Receptor probably implicated in the regulation of exocytosis. This is Adhesion G protein-coupled receptor L1 from Homo sapiens (Human).